The chain runs to 406 residues: LIM/homeobox protein Lhx1 (406 aa).

LIM zinc-binding domains lie at 4 to 54 and 63 to 117; these read CAGC…CKND and CAGC…CKED. Over residues 125-136 the composition is skewed to polar residues; that stretch reads AKENSLHSATTG. Disordered stretches follow at residues 125–187 and 296–372; these read AKEN…RTTI and FPQG…SAEV. Low complexity predominate over residues 137–148; the sequence is SDPSLSPDSQDP. The segment covering 151-167 has biased composition (basic and acidic residues); the sequence is DDAKDSESANVSDKETG. Positions 180–239 form a DNA-binding region, homeobox; it reads RRGPRTTIKAKQLETLKAAFAATPKPTRHIREQLAQETGLNMRVIQVWFQNRRSKERRMK.

It localises to the nucleus. Functionally, transcriptional factor that defines subclasses of motoneurons that segregate into columns in the spinal cord and select distinct axon pathways. Acts in conjunction with ISL-2. This is LIM/homeobox protein Lhx1 (LHX1) from Gallus gallus (Chicken).